The chain runs to 350 residues: Leucine-rich repeat-containing protein 23 (350 aa).

The segment covering 1 to 54 (MEDETLEDGPEEEEEDEEEGTAEETNQDVTERDEEEEAEKDEEEDKEEEEEAEK) has biased composition (acidic residues). The tract at residues 1–64 (MEDETLEDGP…EEPPPHMPLS (64 aa)) is disordered. LRR repeat units lie at residues 107–128 (HLRYVDLSQNSLQDLSPLGALT), 129–150 (HLLSLRADHNQLVSVSGLGELP), 151–171 (YLQVASFAQNRIKSLQGFGHP), 172–193 (RLETLNLIGNELRDLEGLECSN), 196–216 (SLHTLELRSNQLLSTAGLNLP), 217–238 (SLRELYLGQNNISRLEGLEALV), 239–260 (NLTTLHLRDNQLESLDGFSEHL), and 262–283 (ALQYLNLRSNMVAKLQEVQKLY). An LRRCT domain is found at 296 to 334 (NPCEEEEGYRMETLIALPQLERLDKDFFEEEEKREAAET). A coiled-coil region spans residues 314–344 (QLERLDKDFFEEEEKREAAETKKAREEEMAE). The disordered stretch occupies residues 325–350 (EEEKREAAETKKAREEEMAEPGEKGN).

It localises to the cytoplasm. It is found in the cytoskeleton. Its subcellular location is the flagellum axoneme. The sequence is that of Leucine-rich repeat-containing protein 23 (lrrc23) from Xenopus tropicalis (Western clawed frog).